Here is a 379-residue protein sequence, read N- to C-terminus: Alkanesulfonate monooxygenase (379 aa).

Belongs to the SsuD family.

It carries out the reaction an alkanesulfonate + FMNH2 + O2 = an aldehyde + FMN + sulfite + H2O + 2 H(+). Catalyzes the desulfonation of aliphatic sulfonates. The sequence is that of Alkanesulfonate monooxygenase from Pseudomonas syringae pv. syringae (strain B728a).